Consider the following 136-residue polypeptide: Protein NrdI (136 aa).

The protein belongs to the NrdI family.

Functionally, probably involved in ribonucleotide reductase function. This is Protein NrdI from Klebsiella pneumoniae (strain 342).